An 88-amino-acid polypeptide reads, in one-letter code: Large ribosomal subunit protein bL27 (88 aa).

A disordered region spans residues 1-20 (MASKKGVGSTKDGRDSIAKR).

The protein belongs to the bacterial ribosomal protein bL27 family.

The chain is Large ribosomal subunit protein bL27 (rpmA) from Geobacillus stearothermophilus (Bacillus stearothermophilus).